The sequence spans 522 residues: Glucose-1-phosphate adenylyltransferase large subunit 1, chloroplastic (522 aa).

The N-terminal 54 residues, 1–54 (MVVSADCRISLSAPSCIRSSSTGLTRHIKLGSFCNGELMGKKLNLSQLPNIRLR), are a transit peptide targeting the chloroplast. Serine 428 carries the phosphoserine modification.

Belongs to the bacterial/plant glucose-1-phosphate adenylyltransferase family. As to quaternary structure, heterotetramer. Leaves.

The protein resides in the plastid. It is found in the chloroplast. The enzyme catalyses alpha-D-glucose 1-phosphate + ATP + H(+) = ADP-alpha-D-glucose + diphosphate. The protein operates within glycan biosynthesis; starch biosynthesis. With respect to regulation, activated by 3'phosphoglycerate, inhibited by orthophosphate. Allosteric regulation. In terms of biological role, this protein plays a role in synthesis of starch. It catalyzes the synthesis of the activated glycosyl donor, ADP-glucose from Glc-1-P and ATP. The protein is Glucose-1-phosphate adenylyltransferase large subunit 1, chloroplastic (ADG2) of Arabidopsis thaliana (Mouse-ear cress).